Here is a 497-residue protein sequence, read N- to C-terminus: Delayed-rectifier potassium channel regulatory subunit KCNS1 (497 aa).

The Cytoplasmic segment spans residues M1–L186. A helical transmembrane segment spans residues P187 to I208. Residues H209–P239 lie on the Extracellular side of the membrane. Residues V240–L262 traverse the membrane as a helical segment. Residues A263–P273 lie on the Cytoplasmic side of the membrane. The chain crosses the membrane as a helical span at residues L274–A291. Topologically, residues G292–L309 are extracellular. The helical; Voltage-sensor transmembrane segment at G310–H330 threads the bilayer. The Cytoplasmic portion of the chain corresponds to S331 to Y345. A helical membrane pass occupies residues R346–Y367. Topologically, residues T368–I379 are extracellular. The segment at residues P380–T391 is an intramembrane region (helical). The Selectivity filter signature appears at T392 to D397. The stretch at T392–V399 is an intramembrane region. Residues P400 to K406 lie on the Extracellular side of the membrane. The helical transmembrane segment at L407–Y435 threads the bilayer. The Cytoplasmic segment spans residues R436 to Y497. A disordered region spans residues S464–Y497. A compositionally biased stretch (basic and acidic residues) spans T470 to D482.

It belongs to the potassium channel family. S (TC 1.A.1.2) subfamily. Kv9.1/KCNS1 sub-subfamily. Heterotetramer with KCNB1. Heterotetramer with KCNB2. Does not form homomultimers. As to expression, highly expressed in brain, but not in the other tissues tested.

The protein resides in the cell membrane. Its function is as follows. Potassium channel regulatory subunit that modulate the delayed rectifier voltage-gated potassium channel activity of KCNB1 and KCNB2 by altering their kinetics, expression levels, and shifting the half-inactivation potential to more polarized values. While it does not form functional channels on its own, it can form functional heterotetrameric channels with KCNB1 and KCNB2. Each regulatory subunit has unique regulatory properties that can lead to extensive inhibition, significant changes in kinetics, and/or substantial shifts in the voltage dependencies of the inactivation process. The sequence is that of Delayed-rectifier potassium channel regulatory subunit KCNS1 from Rattus norvegicus (Rat).